A 482-amino-acid chain; its full sequence is Tripartite motif-containing protein 10 (482 aa).

The RING-type zinc-finger motif lies at 16 to 61 (CPICQGTLREPVTIDCGHNFCCVCLTRYLEIPCLDPGELPTCPLCK). The B box-type zinc-finger motif lies at 95 to 136 (EEEDVCLEHREKVYYFCEDDEMQLCVVCREAWEHRHHTVRFL). Residues Cys-100, His-103, Cys-122, and His-128 each coordinate Zn(2+). In terms of domain architecture, B30.2/SPRY spans 293-482 (REMKTFLEKL…GRGSKFSLSS (190 aa)).

This sequence belongs to the TRIM/RBCC family. In terms of assembly, interacts with IFNAR1; this interaction prevents association of IFNAR1 with TYK2.

It is found in the cytoplasm. Functionally, E3 ligase that plays an essential role in the differentiation and survival of terminal erythroid cells. May directly bind to PTEN and promote its ubiquitination, resulting in its proteasomal degradation and activation of hypertrophic signaling. In addition, plays a role in immune response regulation by repressing the phosphorylation of STAT1 and STAT2 in the interferon/JAK/STAT signaling pathway independent of its E3 ligase activity. Mechanistically, interacts with the intracellular domain of IFNAR1 and thereby inhibits the association of TYK2 and IFNAR1. The sequence is that of Tripartite motif-containing protein 10 (TRIM10) from Sus scrofa (Pig).